The chain runs to 127 residues: Small ribosomal subunit protein uS11 (127 aa).

The protein belongs to the universal ribosomal protein uS11 family. Part of the 30S ribosomal subunit. Interacts with proteins S7 and S18. Binds to IF-3.

Functionally, located on the platform of the 30S subunit, it bridges several disparate RNA helices of the 16S rRNA. Forms part of the Shine-Dalgarno cleft in the 70S ribosome. This chain is Small ribosomal subunit protein uS11, found in Chlorobium chlorochromatii (strain CaD3).